We begin with the raw amino-acid sequence, 420 residues long: Serine palmitoyltransferase (420 aa).

Residues glycine 134 to tyrosine 135, histidine 234, threonine 262, and serine 264 each bind pyridoxal 5'-phosphate. Lysine 265 bears the N6-(pyridoxal phosphate)lysine mark.

This sequence belongs to the class-II pyridoxal-phosphate-dependent aminotransferase family. In terms of assembly, homodimer. Pyridoxal 5'-phosphate serves as cofactor.

It is found in the cytoplasm. It carries out the reaction L-serine + hexadecanoyl-CoA + H(+) = 3-oxosphinganine + CO2 + CoA. It functions in the pathway lipid metabolism; sphingolipid metabolism. Not inhibited by relatively high concentrations of palmitoyl-CoA. Inhibited by both D-cycloserine (DCS) and L-cycloserine (LCS), which inactivate SPT by transamination to form a free pyridoxamine 5'-phosphate (PMP) and beta-aminooxyacetaldehyde that remain bound at the active site. Inhibition is reversed by incubation with excess pyridoxal phosphate. Inhibited by the fungal natural product myriocin, which acts as a competitive inhibitor for both L-serine and palmitoyl-CoA substrates. In terms of biological role, catalyzes the condensation of L-serine with palmitoyl-CoA (hexadecanoyl-CoA) to produce 3-oxosphinganine. Exhibits a broad substrate specificity concerning the chain length and the degree of unsaturation of acyl-CoA. The chain is Serine palmitoyltransferase from Sphingomonas paucimobilis (Pseudomonas paucimobilis).